The chain runs to 542 residues: Adenosylmethionine-8-amino-7-oxononanoate aminotransferase (542 aa).

Residue 170–171 (GS) participates in pyridoxal 5'-phosphate binding. A substrate-binding site is contributed by tyrosine 205. Aspartate 311 contributes to the pyridoxal 5'-phosphate binding site. Substrate-binding residues include lysine 340, glycine 375, and arginine 470. Lysine 340 is subject to N6-(pyridoxal phosphate)lysine. The interval 509–542 (DGGLWTKRPDGPDNPDKANTPDTPDGARTGETVV) is disordered. The segment covering 515-524 (KRPDGPDNPD) has biased composition (basic and acidic residues).

The protein belongs to the class-III pyridoxal-phosphate-dependent aminotransferase family. BioA subfamily. In terms of assembly, homodimer. Pyridoxal 5'-phosphate is required as a cofactor.

It is found in the cytoplasm. It carries out the reaction (8S)-8-amino-7-oxononanoate + S-adenosyl-L-methionine = S-adenosyl-4-methylsulfanyl-2-oxobutanoate + (7R,8S)-7,8-diammoniononanoate. Its pathway is cofactor biosynthesis; biotin biosynthesis; 7,8-diaminononanoate from 8-amino-7-oxononanoate (SAM route): step 1/1. In terms of biological role, catalyzes the transfer of the alpha-amino group from S-adenosyl-L-methionine (SAM) to 7-keto-8-aminopelargonic acid (KAPA) to form 7,8-diaminopelargonic acid (DAPA). It is the only aminotransferase known to utilize SAM as an amino donor. This Nitratidesulfovibrio vulgaris (strain ATCC 29579 / DSM 644 / CCUG 34227 / NCIMB 8303 / VKM B-1760 / Hildenborough) (Desulfovibrio vulgaris) protein is Adenosylmethionine-8-amino-7-oxononanoate aminotransferase.